The chain runs to 432 residues: Enolase (432 aa).

Residue Gln167 coordinates (2R)-2-phosphoglycerate. Glu209 serves as the catalytic Proton donor. Residues Asp246, Glu291, and Asp318 each coordinate Mg(2+). Residues Lys343, Arg372, Ser373, and Lys394 each contribute to the (2R)-2-phosphoglycerate site. The active-site Proton acceptor is Lys343.

The protein belongs to the enolase family. Component of the RNA degradosome, a multiprotein complex involved in RNA processing and mRNA degradation. Mg(2+) serves as cofactor.

It is found in the cytoplasm. Its subcellular location is the secreted. The protein resides in the cell surface. It catalyses the reaction (2R)-2-phosphoglycerate = phosphoenolpyruvate + H2O. The protein operates within carbohydrate degradation; glycolysis; pyruvate from D-glyceraldehyde 3-phosphate: step 4/5. Functionally, catalyzes the reversible conversion of 2-phosphoglycerate (2-PG) into phosphoenolpyruvate (PEP). It is essential for the degradation of carbohydrates via glycolysis. This is Enolase from Colwellia psychrerythraea (strain 34H / ATCC BAA-681) (Vibrio psychroerythus).